Consider the following 418-residue polypeptide: Tyrosine--tRNA ligase (418 aa).

Tyr-34 contacts L-tyrosine. Positions 39–48 (PTADSLHLGH) match the 'HIGH' region motif. Residues Tyr-169 and Gln-173 each contribute to the L-tyrosine site. Positions 229–233 (KFGKS) match the 'KMSKS' region motif. Lys-232 contacts ATP. Positions 352 to 418 (NNIVELLVSS…GKKKYFVLTY (67 aa)) constitute an S4 RNA-binding domain.

This sequence belongs to the class-I aminoacyl-tRNA synthetase family. TyrS type 1 subfamily. Homodimer.

It is found in the cytoplasm. The catalysed reaction is tRNA(Tyr) + L-tyrosine + ATP = L-tyrosyl-tRNA(Tyr) + AMP + diphosphate + H(+). In terms of biological role, catalyzes the attachment of tyrosine to tRNA(Tyr) in a two-step reaction: tyrosine is first activated by ATP to form Tyr-AMP and then transferred to the acceptor end of tRNA(Tyr). This chain is Tyrosine--tRNA ligase, found in Streptococcus pneumoniae (strain CGSP14).